A 545-amino-acid polypeptide reads, in one-letter code: Calcium-binding mitochondrial carrier SAL1 (545 aa).

One can recognise an EF-hand 1 domain in the interval 11–46; that stretch reads QRDIRYACLFKELDVKGNGQVTLDNLISAFEKNDHP. Residues Lys-65, Asp-70, Asp-93, Asp-95, Asp-97, Lys-99, and Glu-104 each contribute to the Ca(2+) site. 3 EF-hand domains span residues 80 to 115, 120 to 155, and 156 to 191; these read NAES…LDNQ, NELN…RGQA, and SHKK…VPRK. Ca(2+) contacts are provided by Thr-161 and Ser-166. 3 Solcar repeats span residues 225-332, 345-434, and 452-541; these read IRGF…TKKI, LSKF…LKKW, and LSNL…LKKF. A run of 6 helical transmembrane segments spans residues 231-248, 307-326, 355-368, 409-428, 458-475, and 516-535; these read FIAG…TAPF, GNGL…FGSF, GLAG…VYPI, GVTV…LGTF, LPMG…VYPI, and GLVP…YLCY.

The protein belongs to the mitochondrial carrier (TC 2.A.29) family.

Its subcellular location is the mitochondrion inner membrane. Functionally, calcium-dependent mitochondrial solute carrier. The chain is Calcium-binding mitochondrial carrier SAL1 (SAL1) from Saccharomyces cerevisiae (Baker's yeast).